The chain runs to 385 residues: Chaperone protein DnaJ (385 aa).

The region spanning 5–70 (DYYEVLGVSK…DKKAAYDRFG (66 aa)) is the J domain. The segment at 143 to 221 (GLSKQITVPS…CGGAGRQEKD (79 aa)) adopts a CR-type zinc-finger fold. Zn(2+)-binding residues include Cys-156, Cys-159, Cys-173, Cys-176, Cys-195, Cys-198, Cys-209, and Cys-212. CXXCXGXG motif repeat units lie at residues 156 to 163 (CSSCDGTG), 173 to 180 (CPTCSGMG), 195 to 202 (CPTCNGMG), and 209 to 216 (CRTCGGAG). The tract at residues 299-323 (GGRSRVRVPEGSQSGRQMRLRGKGM) is disordered.

This sequence belongs to the DnaJ family. In terms of assembly, homodimer. The cofactor is Zn(2+).

Its subcellular location is the cytoplasm. Its function is as follows. Participates actively in the response to hyperosmotic and heat shock by preventing the aggregation of stress-denatured proteins and by disaggregating proteins, also in an autonomous, DnaK-independent fashion. Unfolded proteins bind initially to DnaJ; upon interaction with the DnaJ-bound protein, DnaK hydrolyzes its bound ATP, resulting in the formation of a stable complex. GrpE releases ADP from DnaK; ATP binding to DnaK triggers the release of the substrate protein, thus completing the reaction cycle. Several rounds of ATP-dependent interactions between DnaJ, DnaK and GrpE are required for fully efficient folding. Also involved, together with DnaK and GrpE, in the DNA replication of plasmids through activation of initiation proteins. The sequence is that of Chaperone protein DnaJ from Jannaschia sp. (strain CCS1).